Here is a 186-residue protein sequence, read N- to C-terminus: UPF0669 protein C6orf120 homolog (186 aa).

The N-terminal stretch at 1-19 (MVPFWAGLLVLSALPQTLG) is a signal peptide. N-linked (GlcNAc...) asparagine glycosylation occurs at Asn-47. Residues 141–165 (KNSYSSDETPGQPRQSQGPEDTEEE) form a disordered region. A compositionally biased stretch (polar residues) spans 142 to 159 (NSYSSDETPGQPRQSQGP).

Belongs to the UPF0669 family.

It localises to the secreted. This chain is UPF0669 protein C6orf120 homolog, found in Danio rerio (Zebrafish).